A 433-amino-acid polypeptide reads, in one-letter code: Steroid C26-monooxygenase (433 aa).

G202 serves as a coordination point for substrate. Residue C377 coordinates heme.

It belongs to the cytochrome P450 family. Heme serves as cofactor.

It catalyses the reaction cholest-4-en-3-one + 6 reduced [2Fe-2S]-[ferredoxin] + 3 O2 + 5 H(+) = (25S)-3-oxocholest-4-en-26-oate + 6 oxidized [2Fe-2S]-[ferredoxin] + 4 H2O. Its pathway is steroid metabolism; cholesterol degradation. In terms of biological role, involved in the utilization of cholesterol as the sole carbon and energy source by degrading the side chain during infection. Primarily catalyzes the sequential oxidation of the terminal methyl of cholest-4-en-3-one into (25S)-26-hydroxycholest-4-en-3-one (alcohol), (25S)-26-oxocholest-4-en-3-one (aldehyde), to finally yield the carboxylic acid (25S)-3-oxocholest-4-en-26-oate. Also able to sequentially oxidize cholesterol itself, not only cholest-4-en-3-one. This Mycobacterium bovis (strain ATCC BAA-935 / AF2122/97) protein is Steroid C26-monooxygenase (cyp125).